The chain runs to 609 residues: Acetyl-coenzyme A carboxylase carboxyl transferase subunits beta/alpha (609 aa).

Positions 1–271 (MTLEATAIEA…QTAEFLLTHG (271 aa)) are acetyl-coenzyme A carboxylase carboxyl transferase subunit beta. The CoA carboxyltransferase N-terminal domain occupies 39–308 (SWLLCGGCGT…GIPRQAGRPD (270 aa)). The segment at 39-559 (SWLLCGGCGT…REALRGALAD (521 aa)) is carboxyltransferase. 4 residues coordinate Zn(2+): C43, C46, C62, and C65. A C4-type zinc finger spans residues 43 to 65 (CGGCGTMLYERRFAREGRVCADC). Residues 272–582 (VVDLISPRRE…RARFRQFGVA (311 aa)) form an acetyl-coenzyme A carboxylase carboxyl transferase subunit alpha region. The CoA carboxyltransferase C-terminal domain maps to 314 to 559 (DPEQLARRDA…REALRGALAD (246 aa)). The span at 582–592 (ATPAPATAPAA) shows a compositional bias: low complexity. The segment at 582-609 (ATPAPATAPAASDDAHESQTDRSVEATR) is disordered. Basic and acidic residues predominate over residues 594-609 (DDAHESQTDRSVEATR).

The protein in the N-terminal section; belongs to the AccD/PCCB family. This sequence in the C-terminal section; belongs to the AccA family. As to quaternary structure, acetyl-CoA carboxylase is a heterotetramer composed of biotin carboxyl carrier protein (AccB), biotin carboxylase (AccC) and two subunits of ACCase subunit beta/alpha. Requires Zn(2+) as cofactor.

It is found in the cytoplasm. The catalysed reaction is N(6)-carboxybiotinyl-L-lysyl-[protein] + acetyl-CoA = N(6)-biotinyl-L-lysyl-[protein] + malonyl-CoA. The protein operates within lipid metabolism; malonyl-CoA biosynthesis; malonyl-CoA from acetyl-CoA: step 1/1. In terms of biological role, component of the acetyl coenzyme A carboxylase (ACC) complex. Biotin carboxylase (BC) catalyzes the carboxylation of biotin on its carrier protein (BCCP) and then the CO(2) group is transferred by the transcarboxylase to acetyl-CoA to form malonyl-CoA. This is Acetyl-coenzyme A carboxylase carboxyl transferase subunits beta/alpha (accD) from Frankia alni (strain DSM 45986 / CECT 9034 / ACN14a).